Consider the following 197-residue polypeptide: Imidazoleglycerol-phosphate dehydratase (197 aa).

Belongs to the imidazoleglycerol-phosphate dehydratase family.

The protein localises to the cytoplasm. It carries out the reaction D-erythro-1-(imidazol-4-yl)glycerol 3-phosphate = 3-(imidazol-4-yl)-2-oxopropyl phosphate + H2O. Its pathway is amino-acid biosynthesis; L-histidine biosynthesis; L-histidine from 5-phospho-alpha-D-ribose 1-diphosphate: step 6/9. This is Imidazoleglycerol-phosphate dehydratase from Azotobacter vinelandii (strain DJ / ATCC BAA-1303).